A 288-amino-acid chain; its full sequence is Small ribosomal subunit protein uS2 (288 aa).

Residues 228-288 (RAGLSSDKDA…PAAEAPSTEA (61 aa)) are disordered. Over residues 257–288 (QAAPAAEAAPAAEAQAAPAAEAPAAEAPSTEA) the composition is skewed to low complexity.

It belongs to the universal ribosomal protein uS2 family.

The protein is Small ribosomal subunit protein uS2 of Rhodococcus opacus (strain B4).